Here is a 478-residue protein sequence, read N- to C-terminus: Serine/threonine-protein phosphatase T (478 aa).

3 TPR repeats span residues 9–42, 43–76, and 78–110; these read ATAL…YDRE, PSFF…DPAY, and KAYW…EPNN. The interval 151-463 is catalytic; that stretch reads AVDDSYDGVR…QVFEAVPHPD (313 aa). Mn(2+)-binding residues include aspartate 221, histidine 223, aspartate 250, and asparagine 282. Catalysis depends on histidine 283, which acts as the Proton donor/acceptor. Mn(2+) is bound by residues histidine 331 and histidine 408.

This sequence belongs to the PPP phosphatase family. PP-5 (PP-T) subfamily. Requires Mg(2+) as cofactor. Mn(2+) serves as cofactor.

It is found in the nucleus. It carries out the reaction O-phospho-L-seryl-[protein] + H2O = L-seryl-[protein] + phosphate. The catalysed reaction is O-phospho-L-threonyl-[protein] + H2O = L-threonyl-[protein] + phosphate. In terms of biological role, protein phosphatase that specifically binds to and dephosphorylates the molecular chaperone Hsp90. Dephosphorylation positively regulates the Hsp90 chaperone machinery. The protein is Serine/threonine-protein phosphatase T of Aspergillus oryzae (strain ATCC 42149 / RIB 40) (Yellow koji mold).